Consider the following 129-residue polypeptide: Large ribosomal subunit protein bL20 (129 aa).

It belongs to the bacterial ribosomal protein bL20 family.

Its function is as follows. Binds directly to 23S ribosomal RNA and is necessary for the in vitro assembly process of the 50S ribosomal subunit. It is not involved in the protein synthesizing functions of that subunit. The chain is Large ribosomal subunit protein bL20 from Mycobacterium sp. (strain JLS).